The sequence spans 324 residues: Adenine deaminase (324 aa).

3 residues coordinate Zn(2+): His8, His10, and His186. The active-site Proton donor is the Glu189. Residue Asp267 coordinates Zn(2+). Asp268 contacts substrate.

This sequence belongs to the metallo-dependent hydrolases superfamily. Adenosine and AMP deaminases family. Adenine deaminase type 2 subfamily. Zn(2+) is required as a cofactor.

It carries out the reaction adenine + H2O + H(+) = hypoxanthine + NH4(+). Functionally, catalyzes the hydrolytic deamination of adenine to hypoxanthine. Plays an important role in the purine salvage pathway and in nitrogen catabolism. The polypeptide is Adenine deaminase (Mesorhizobium japonicum (strain LMG 29417 / CECT 9101 / MAFF 303099) (Mesorhizobium loti (strain MAFF 303099))).